The primary structure comprises 254 residues: Sensory rhodopsin (254 aa).

Residues 1–4 (MTGA) lie on the Extracellular side of the membrane. Residues 5–26 (VTSAYWLAAVAFLIGVGITAAL) form a helical membrane-spanning segment. The Cytoplasmic segment spans residues 27 to 35 (YAKLEGSRA). A helical transmembrane segment spans residues 36-57 (RTRLAALAVIPGFAGLSYVGMA). Over 58-71 (LGIGTVTVNGAELV) the chain is Extracellular. The chain crosses the membrane as a helical span at residues 72–93 (GLRYVDWVVTTPLLVGFIGYNA). At 94–96 (GAS) the chain is on the cytoplasmic side. A helical membrane pass occupies residues 97 to 119 (RRAIAGVMIADALMIVFGAAAVV). Residues 120–123 (SGGT) lie on the Extracellular side of the membrane. The chain crosses the membrane as a helical span at residues 124 to 151 (LKWALFGVSALFHVSLFAYLYVIFPGGI). Over 152–154 (PDD) the chain is Cytoplasmic. Residues 155–182 (PMQRGLFSLLKNHVGLLWLAYPFVWLMG) form a helical membrane-spanning segment. The Extracellular portion of the chain corresponds to 183–190 (PAGIGFTG). Residues 191–223 (AVGAALTYAFLDVLAKVPYVYFFYARRQAFIDV) traverse the membrane as a helical segment. N6-(retinylidene)lysine is present on K206. The Cytoplasmic segment spans residues 224–254 (TDSRAAAKGDGPAVGGEAPVATGDDAPTAAD). The interval 231–254 (KGDGPAVGGEAPVATGDDAPTAAD) is disordered.

It belongs to the archaeal/bacterial/fungal opsin family.

Its subcellular location is the cell membrane. Its function is as follows. Involved in the control of phototaxis. The sequence is that of Sensory rhodopsin (sop) from Halorubrum sodomense.